Reading from the N-terminus, the 486-residue chain is Probable cytosol aminopeptidase (486 aa).

The protein belongs to the peptidase M17 family. Requires Mn(2+) as cofactor.

The protein resides in the cytoplasm. It carries out the reaction Release of an N-terminal amino acid, Xaa-|-Yaa-, in which Xaa is preferably Leu, but may be other amino acids including Pro although not Arg or Lys, and Yaa may be Pro. Amino acid amides and methyl esters are also readily hydrolyzed, but rates on arylamides are exceedingly low.. The catalysed reaction is Release of an N-terminal amino acid, preferentially leucine, but not glutamic or aspartic acids.. Functionally, presumably involved in the processing and regular turnover of intracellular proteins. Catalyzes the removal of unsubstituted N-terminal amino acids from various peptides. The protein is Probable cytosol aminopeptidase (pepA) of Synechococcus elongatus (strain ATCC 33912 / PCC 7942 / FACHB-805) (Anacystis nidulans R2).